The sequence spans 208 residues: Cytochrome c biogenesis ATP-binding export protein CcmA (208 aa).

In terms of domain architecture, ABC transporter spans 3-206; that stretch reads LSGKDLTAYR…LEKFLPPQEK (204 aa). 35 to 42 is an ATP binding site; it reads GPNGIGKS.

This sequence belongs to the ABC transporter superfamily. CcmA exporter (TC 3.A.1.107) family. The complex is composed of two ATP-binding proteins (CcmA) and two transmembrane proteins (CcmB).

It is found in the cell inner membrane. It catalyses the reaction heme b(in) + ATP + H2O = heme b(out) + ADP + phosphate + H(+). Part of the ABC transporter complex CcmAB involved in the biogenesis of c-type cytochromes; once thought to export heme, this seems not to be the case, but its exact role is uncertain. Responsible for energy coupling to the transport system. This chain is Cytochrome c biogenesis ATP-binding export protein CcmA, found in Bartonella henselae (strain ATCC 49882 / DSM 28221 / CCUG 30454 / Houston 1) (Rochalimaea henselae).